Reading from the N-terminus, the 368-residue chain is Isocitrate dehydrogenase [NAD] regulatory subunit 3, mitochondrial (368 aa).

Residues 1-26 constitute a mitochondrion transit peptide; it reads MARRSVSIFNRLLANPPSPFTSLSRS.

The protein belongs to the isocitrate and isopropylmalate dehydrogenases family. As to quaternary structure, heterooligomer of catalytic and regulatory subunits. Interacts with 14-3-3-like proteins GRF1 GRF3 and GRF8. As to expression, mainly expressed at a low level in pollen.

It localises to the mitochondrion. Functionally, performs an essential role in the oxidative function of the citric acid cycle. The protein is Isocitrate dehydrogenase [NAD] regulatory subunit 3, mitochondrial (IDH3) of Arabidopsis thaliana (Mouse-ear cress).